The chain runs to 339 residues: MIRQKIAVLGPGSWGTALSQVLNDNGHEVRIWGNIPEQLDEINEHHTNKRYFKDVVLDEKIKAYHDLEDALKDIDAVLFVVPTKVTRLVAKQVSQILDHKAVVMHASKGLEPGTHERLSVILEEEIPNHLRSDIVVVSGPSHAEETIVRDITLITAASKDLEAAKYVQKLFSNNYFRLYTNPDVIGVETAGALKNIIAVGAGALHGMGYGDNAKAAVITRGLAEITRLGVKLGADPLTYSGLSGVGDLIVTGTSIYSRNWRAGDALGRGEKLEDIERNMGMVIEGISTTKVAYELSRELNVYMPITCAIYQSIYEGKNIKEAITSMMSNEFRAENEWSK.

3 residues coordinate NADPH: S13, W14, and K108. K108, G139, and S141 together coordinate sn-glycerol 3-phosphate. A143 is an NADPH binding site. Positions 194, 247, 257, 258, and 259 each coordinate sn-glycerol 3-phosphate. K194 functions as the Proton acceptor in the catalytic mechanism. Position 258 (R258) interacts with NADPH. Positions 282 and 284 each coordinate NADPH.

Belongs to the NAD-dependent glycerol-3-phosphate dehydrogenase family.

The protein resides in the cytoplasm. The catalysed reaction is sn-glycerol 3-phosphate + NAD(+) = dihydroxyacetone phosphate + NADH + H(+). The enzyme catalyses sn-glycerol 3-phosphate + NADP(+) = dihydroxyacetone phosphate + NADPH + H(+). It functions in the pathway membrane lipid metabolism; glycerophospholipid metabolism. Catalyzes the reduction of the glycolytic intermediate dihydroxyacetone phosphate (DHAP) to sn-glycerol 3-phosphate (G3P), the key precursor for phospholipid synthesis. This Streptococcus mutans serotype c (strain ATCC 700610 / UA159) protein is Glycerol-3-phosphate dehydrogenase [NAD(P)+].